We begin with the raw amino-acid sequence, 228 residues long: Ribulose-phosphate 3-epimerase (228 aa).

Ser-9 contributes to the substrate binding site. Positions 34, 36, and 70 each coordinate a divalent metal cation. Asp-36 functions as the Proton acceptor in the catalytic mechanism. Residues His-70, 146 to 149 (GFPG), 179 to 181 (DGG), and 201 to 202 (GS) contribute to the substrate site. An a divalent metal cation-binding site is contributed by Asp-179. Asp-179 (proton donor) is an active-site residue.

Belongs to the ribulose-phosphate 3-epimerase family. A divalent metal cation is required as a cofactor.

It carries out the reaction D-ribulose 5-phosphate = D-xylulose 5-phosphate. Its pathway is carbohydrate degradation. Catalyzes the reversible epimerization of D-ribulose 5-phosphate to D-xylulose 5-phosphate. The protein is Ribulose-phosphate 3-epimerase of Buchnera aphidicola subsp. Baizongia pistaciae (strain Bp).